Consider the following 366-residue polypeptide: Flagellar P-ring protein (366 aa).

The signal sequence occupies residues 1-22 (MFTRKSVILMAVLLIWSAVSYA).

This sequence belongs to the FlgI family. The basal body constitutes a major portion of the flagellar organelle and consists of four rings (L,P,S, and M) mounted on a central rod.

It localises to the periplasm. The protein resides in the bacterial flagellum basal body. Functionally, assembles around the rod to form the L-ring and probably protects the motor/basal body from shearing forces during rotation. This is Flagellar P-ring protein from Hydrogenovibrio crunogenus (strain DSM 25203 / XCL-2) (Thiomicrospira crunogena).